The sequence spans 190 residues: MPQLPVLETAELPSDAVEVGRITDAWGVKGWFKVLPYSSNPEALLAAKSWLLQPAEKGAKSFFAGTVLLPIRQARTHSDSVVAWAQGVDDRDAAEALRGARIFVPRANFPVAGDDEYYWVDLIGLPVVNREGVALGTVRDLLPTGPQTTLVLAYEHEGKPHERMIPFVSAYVDKVDLAGRCITVDWQPDY.

The PRC barrel domain maps to 114-190 (DDEYYWVDLI…CITVDWQPDY (77 aa)).

The protein belongs to the RimM family. In terms of assembly, binds ribosomal protein uS19.

The protein localises to the cytoplasm. An accessory protein needed during the final step in the assembly of 30S ribosomal subunit, possibly for assembly of the head region. Essential for efficient processing of 16S rRNA. May be needed both before and after RbfA during the maturation of 16S rRNA. It has affinity for free ribosomal 30S subunits but not for 70S ribosomes. The protein is Ribosome maturation factor RimM of Acidovorax sp. (strain JS42).